The primary structure comprises 302 residues: D-alanine--D-alanine ligase (302 aa).

In terms of domain architecture, ATP-grasp spans 100-295 (KTVFDHHGIL…FNELIAKLIE (196 aa)). 126 to 180 (QDLEPPVFIKPNSGGSSLGMTFARTAEELEKGIETVFSLGDSALVEEYTKGIEVT) is an ATP binding site. The Mg(2+) site is built by Asp-250, Glu-262, and Asn-264.

Belongs to the D-alanine--D-alanine ligase family. The cofactor is Mg(2+). It depends on Mn(2+) as a cofactor.

The protein resides in the cytoplasm. The catalysed reaction is 2 D-alanine + ATP = D-alanyl-D-alanine + ADP + phosphate + H(+). The protein operates within cell wall biogenesis; peptidoglycan biosynthesis. Functionally, cell wall formation. This chain is D-alanine--D-alanine ligase, found in Maridesulfovibrio salexigens (strain ATCC 14822 / DSM 2638 / NCIMB 8403 / VKM B-1763) (Desulfovibrio salexigens).